A 90-amino-acid polypeptide reads, in one-letter code: MSNNETMMFNVEKEKVNEARELLVSVYKALKEKGYNPINQIVGYILSGDPTYITNHLDARSSIRKVERDELLEEILRCYLEECIGKEGSV.

It belongs to the UPF0297 family.

This is UPF0297 protein Cthe_0151 from Acetivibrio thermocellus (strain ATCC 27405 / DSM 1237 / JCM 9322 / NBRC 103400 / NCIMB 10682 / NRRL B-4536 / VPI 7372) (Clostridium thermocellum).